Consider the following 1529-residue polypeptide: Myosin-11 (1529 aa).

A Myosin N-terminal SH3-like domain is found at Ile-11–Met-60. The 671-residue stretch at Gly-65–Thr-735 folds into the Myosin motor domain. ATP contacts are provided by residues Gly-159–Thr-166 and Asn-212–Lys-220. Actin-binding stretches follow at residues Leu-498–Phe-532, Thr-534–Val-557, Phe-592–Leu-616, and Leu-616–Asn-638. IQ domains lie at Leu-738 to Ser-767, Leu-761 to Ala-790, Arg-786 to Val-815, Leu-809 to Ala-838, Gln-834 to Leu-863, and Leu-857 to Glu-886. Residues Thr-887 to Ala-1059 adopt a coiled-coil conformation. Residues Glu-993–Ala-1027 show a composition bias toward basic and acidic residues. Disordered regions lie at residues Glu-993–Gln-1031 and Ile-1096–Lys-1115. Residues Asp-1163–Glu-1472 enclose the Dilute domain.

This sequence belongs to the TRAFAC class myosin-kinesin ATPase superfamily. Myosin family. Plant myosin class XI subfamily. In terms of assembly, homodimer.

It is found in the cytoplasm. Myosin heavy chain that is required for the cell cycle-regulated transport of various organelles and proteins for their segregation. Functions by binding with its tail domain to receptor proteins on organelles and exerting force with its N-terminal motor domain against actin filaments, thereby transporting its cargo along polarized actin cables. Involved in trafficking of Golgi stacks, mitochondria and peroxisomes. The polypeptide is Myosin-11 (XI-E) (Arabidopsis thaliana (Mouse-ear cress)).